A 377-amino-acid polypeptide reads, in one-letter code: Chaperone protein DnaJ (377 aa).

Residues 5 to 70 (DFYETLGVSK…QKRAAYDRFG (66 aa)) enclose the J domain. The CR-type zinc finger occupies 138–216 (GKTAQIRVPT…CHGQGRVTEE (79 aa)). Residues cysteine 151, cysteine 154, cysteine 168, cysteine 171, cysteine 190, cysteine 193, cysteine 204, and cysteine 207 each contribute to the Zn(2+) site. CXXCXGXG motif repeat units follow at residues 151–158 (CDVCSGSG), 168–175 (CATCQGSG), 190–197 (CPTCHGRG), and 204–211 (CGKCHGQG).

The protein belongs to the DnaJ family. In terms of assembly, homodimer. Requires Zn(2+) as cofactor.

It is found in the cytoplasm. In terms of biological role, participates actively in the response to hyperosmotic and heat shock by preventing the aggregation of stress-denatured proteins and by disaggregating proteins, also in an autonomous, DnaK-independent fashion. Unfolded proteins bind initially to DnaJ; upon interaction with the DnaJ-bound protein, DnaK hydrolyzes its bound ATP, resulting in the formation of a stable complex. GrpE releases ADP from DnaK; ATP binding to DnaK triggers the release of the substrate protein, thus completing the reaction cycle. Several rounds of ATP-dependent interactions between DnaJ, DnaK and GrpE are required for fully efficient folding. Also involved, together with DnaK and GrpE, in the DNA replication of plasmids through activation of initiation proteins. The polypeptide is Chaperone protein DnaJ (Agrobacterium fabrum (strain C58 / ATCC 33970) (Agrobacterium tumefaciens (strain C58))).